The sequence spans 397 residues: Major outer membrane porin, serovar C (397 aa).

The signal sequence occupies residues 1 to 22; sequence MKKLLKSVLVFAALSSASSLQA.

The protein belongs to the chlamydial porin (CP) (TC 1.B.2) family. In terms of assembly, part of a disulfide cross-linked outer membrane complex (COMC) composed of the major outer membrane porin (MOMP), the small cysteine-rich protein (OmcA) and the large cysteine-rich periplasmic protein (OmcB).

Its subcellular location is the cell outer membrane. In terms of biological role, in elementary bodies (EBs, the infectious stage, which is able to survive outside the host cell) provides the structural integrity of the outer envelope through disulfide cross-links with the small cysteine-rich protein and the large cysteine-rich periplasmic protein. It has been described in publications as the Sarkosyl-insoluble COMC (Chlamydia outer membrane complex), and serves as the functional equivalent of peptidoglycan. Functionally, permits diffusion of specific solutes through the outer membrane. The protein is Major outer membrane porin, serovar C (ompA) of Chlamydia trachomatis.